Here is a 415-residue protein sequence, read N- to C-terminus: Carboxypeptidase G2 (415 aa).

An N-terminal signal peptide occupies residues 1-22 (MRPSIHRTAIAAVLATAFVAGT). Zn(2+) is bound at residue His112. Asp114 is a catalytic residue. Residue Asp141 participates in Zn(2+) binding. The Proton acceptor role is filled by Glu175. The Zn(2+) site is built by Glu176, Glu200, and His385.

It belongs to the peptidase M20A family. As to quaternary structure, homodimer. The cofactor is Zn(2+).

The catalysed reaction is Release of C-terminal glutamate residues from a wide range of N-acylating moieties, including peptidyl, aminoacyl, benzoyl, benzyloxycarbonyl, folyl and pteroyl groups.. In terms of biological role, catalyzes the hydrolysis of reduced and non-reduced folates to pteroates and L-glutamate. This enzyme has a broad specificity. This chain is Carboxypeptidase G2 (cpg2), found in Pseudomonas sp. (strain RS-16).